The sequence spans 989 residues: Frequency clock protein (989 aa).

3 disordered regions span residues 1–139, 208–290, and 331–445; these read MADS…PGFR, FAAS…VGTQ, and ISGR…PDRV. Basic and acidic residues predominate over residues 36 to 45; it reads ENHRLARDTS. The segment covering 46–88 has biased composition (polar residues); the sequence is SRVTSSSALGVTESQPQLKSSPTRRNSSGESEPTNWFNQSNRN. Residues 109–119 show a composition bias toward basic and acidic residues; that stretch reads KETDSSNEESR. The span at 233 to 255 shows a compositional bias: low complexity; it reads HSSGVSLSKHDSSSSSRSRPVDS. 2 stretches are compositionally biased toward polar residues: residues 256-274 and 334-343; these read AYNSMSTGRSSHAPHSSGP and RNMQRNQSMP. Basic and acidic residues predominate over residues 377 to 386; sequence DNPRKNRSSK. A compositionally biased stretch (polar residues) spans 387–397; sequence DNGSASNSGGD. The segment covering 402–418 has biased composition (gly residues); sequence GGTGTGSGDGSGSGGRT. A compositionally biased stretch (basic and acidic residues) spans 433–444; it reads RPTRPRDLDPDR. A Phosphothreonine modification is found at threonine 501. 2 positions are modified to phosphoserine: serine 513 and serine 519. Disordered regions lie at residues 524–642, 865–907, and 968–989; these read KIRW…QRRK, WDDG…TYMR, and SVATAGGAESGYSSSMEDVSSS. Residues 564-568 carry the Nuclear localization signal motif; sequence RKKRK. Residues 598 to 615 are compositionally biased toward polar residues; it reads RNSSSIETSLEESMSQGS. Residues 865–886 are compositionally biased toward acidic residues; that stretch reads WDDGDDLASDDEEVEEVEEDSY. The span at 978–989 shows a compositional bias: polar residues; that stretch reads GYSSSMEDVSSS.

Belongs to the FRQ family. In terms of processing, progressive phosphorylation during the late circadian day and early night. Phosphorylation is also involved in regulating frq degradation. Phosphorylation by CKII may have at least three functions; it decreases the stability of frq, reduces the protein complex formation between frq and the white collar proteins, and is important for the closing of the Neurospora circadian negative feedback loop.

Its subcellular location is the nucleus. Circadian clock component involved in the generation of biological rhythms, in particular in rhythm stability, period length, and temperature compensation. Oscillates in abundance with a daily peak early in the morning. Behaves as a negative element in circadian transcriptional loop. May bind to wc-2 protein. The complex frq-wc-2 may turn off the expression of frq. The protein is Frequency clock protein (frq) of Neurospora crassa (strain ATCC 24698 / 74-OR23-1A / CBS 708.71 / DSM 1257 / FGSC 987).